Reading from the N-terminus, the 475-residue chain is Ribulose bisphosphate carboxylase large chain (475 aa).

The propeptide occupies 1–2 (MS). Residue Pro-3 is modified to N-acetylproline. Lys-14 carries the post-translational modification N6,N6,N6-trimethyllysine. Residues Asn-123 and Thr-173 each contribute to the substrate site. Lys-175 serves as the catalytic Proton acceptor. Position 177 (Lys-177) interacts with substrate. Mg(2+) is bound by residues Lys-201, Asp-203, and Glu-204. Position 201 is an N6-carboxylysine (Lys-201). Residue His-294 is the Proton acceptor of the active site. Residues Arg-295, His-327, and Ser-379 each contribute to the substrate site.

It belongs to the RuBisCO large chain family. Type I subfamily. In terms of assembly, heterohexadecamer of 8 large chains and 8 small chains; disulfide-linked. The disulfide link is formed within the large subunit homodimers. Requires Mg(2+) as cofactor. Post-translationally, the disulfide bond which can form in the large chain dimeric partners within the hexadecamer appears to be associated with oxidative stress and protein turnover.

The protein localises to the plastid. The protein resides in the chloroplast. The enzyme catalyses 2 (2R)-3-phosphoglycerate + 2 H(+) = D-ribulose 1,5-bisphosphate + CO2 + H2O. The catalysed reaction is D-ribulose 1,5-bisphosphate + O2 = 2-phosphoglycolate + (2R)-3-phosphoglycerate + 2 H(+). In terms of biological role, ruBisCO catalyzes two reactions: the carboxylation of D-ribulose 1,5-bisphosphate, the primary event in carbon dioxide fixation, as well as the oxidative fragmentation of the pentose substrate in the photorespiration process. Both reactions occur simultaneously and in competition at the same active site. The sequence is that of Ribulose bisphosphate carboxylase large chain from Calycanthus floridus var. glaucus (Eastern sweetshrub).